The following is a 24-amino-acid chain: MATRGFSCLLLVISEIDLSVKRWV.

Belongs to the humanin family.

The protein localises to the secreted. It is found in the cytoplasm. Its function is as follows. Plays a role as a neuroprotective and antiapoptotic factor. The polypeptide is Humanin-like 11 (Homo sapiens (Human)).